We begin with the raw amino-acid sequence, 645 residues long: 1,4-alpha-glucan branching enzyme GlgB (645 aa).

Aspartate 309 acts as the Nucleophile in catalysis. Catalysis depends on glutamate 352, which acts as the Proton donor. Residues 619–645 (VKTRKGSKKQDGSKTKVRSNVTSRGKR) form a disordered region. Positions 636–645 (RSNVTSRGKR) are enriched in polar residues.

The protein belongs to the glycosyl hydrolase 13 family. GlgB subfamily. In terms of assembly, monomer.

It carries out the reaction Transfers a segment of a (1-&gt;4)-alpha-D-glucan chain to a primary hydroxy group in a similar glucan chain.. It functions in the pathway glycan biosynthesis; glycogen biosynthesis. Functionally, catalyzes the formation of the alpha-1,6-glucosidic linkages in glycogen by scission of a 1,4-alpha-linked oligosaccharide from growing alpha-1,4-glucan chains and the subsequent attachment of the oligosaccharide to the alpha-1,6 position. The protein is 1,4-alpha-glucan branching enzyme GlgB of Bacillus cereus (strain G9842).